The primary structure comprises 772 residues: TBC domain-containing protein C4G8.04 (772 aa).

Residues 143–161 (SFFPSSQEPSIPENPSSLT) show a composition bias toward polar residues. Disordered regions lie at residues 143-163 (SFFP…LTGE) and 275-294 (KFFR…TFVS). Over residues 275–291 (KFFRSSPRCSTPSVSST) the composition is skewed to low complexity. The residue at position 395 (T395) is a Phosphothreonine. Positions 504-693 (GVPLCYKAKV…RIFDMLFCDG (190 aa)) constitute a Rab-GAP TBC domain.

The sequence is that of TBC domain-containing protein C4G8.04 from Schizosaccharomyces pombe (strain 972 / ATCC 24843) (Fission yeast).